Reading from the N-terminus, the 406-residue chain is LIM/homeobox protein Lhx1 (406 aa).

LIM zinc-binding domains lie at 4–54 (CAGC…CKND) and 63–117 (CAGC…CKED). 2 disordered regions span residues 128 to 189 (NSLH…TIKA) and 293 to 374 (YDFF…EVFG). The span at 137–148 (SDPSLSPDSQDP) shows a compositional bias: low complexity. Basic and acidic residues predominate over residues 151–167 (DDAKDSESANVSDKEGG). Serine 162 is subject to Phosphoserine. Residues 180–239 (RRGPRTTIKAKQLETLKAAFAATPKPTRHIREQLAQETGLNMRVIQVWFQNRRSKERRMK) constitute a DNA-binding region (homeobox). Over residues 315–327 (PSSGPSGTPLGGL) the composition is skewed to low complexity. The span at 352-362 (GDSPSPEPSLP) shows a compositional bias: pro residues.

Interacts with LDB1 via the tandem LIM domains.

It is found in the nucleus. Its function is as follows. Potential transcription factor. May play a role in early mesoderm formation and later in lateral mesoderm differentiation and neurogenesis. The polypeptide is LIM/homeobox protein Lhx1 (LHX1) (Saimiri boliviensis boliviensis (Bolivian squirrel monkey)).